We begin with the raw amino-acid sequence, 55 residues long: uncharacterized protein (55 aa).

This is an uncharacterized protein from Escherichia coli (strain K12).